The chain runs to 400 residues: tRNA(Met) cytidine acetate ligase (400 aa).

Residues 7-20, G102, N165, and R190 each bind ATP; that span reads ITEYNPLHKGHIYH.

It belongs to the TmcAL family.

It is found in the cytoplasm. The enzyme catalyses cytidine(34) in elongator tRNA(Met) + acetate + ATP = N(4)-acetylcytidine(34) in elongator tRNA(Met) + AMP + diphosphate. Catalyzes the formation of N(4)-acetylcytidine (ac(4)C) at the wobble position of elongator tRNA(Met), using acetate and ATP as substrates. First activates an acetate ion to form acetyladenylate (Ac-AMP) and then transfers the acetyl group to tRNA to form ac(4)C34. The polypeptide is tRNA(Met) cytidine acetate ligase (Clostridium novyi (strain NT)).